A 271-amino-acid polypeptide reads, in one-letter code: 4-hydroxy-tetrahydrodipicolinate reductase (271 aa).

Position 8 to 13 (8 to 13) interacts with NAD(+); it reads GITGRM. Arg-35 is an NADP(+) binding site. NAD(+) is bound by residues 100-102 and 124-127; these read GST and APNM. His-157 acts as the Proton donor/acceptor in catalysis. A (S)-2,3,4,5-tetrahydrodipicolinate-binding site is contributed by His-158. Lys-161 functions as the Proton donor in the catalytic mechanism. 167–168 is a binding site for (S)-2,3,4,5-tetrahydrodipicolinate; that stretch reads GT.

Belongs to the DapB family.

Its subcellular location is the cytoplasm. It carries out the reaction (S)-2,3,4,5-tetrahydrodipicolinate + NAD(+) + H2O = (2S,4S)-4-hydroxy-2,3,4,5-tetrahydrodipicolinate + NADH + H(+). The enzyme catalyses (S)-2,3,4,5-tetrahydrodipicolinate + NADP(+) + H2O = (2S,4S)-4-hydroxy-2,3,4,5-tetrahydrodipicolinate + NADPH + H(+). The protein operates within amino-acid biosynthesis; L-lysine biosynthesis via DAP pathway; (S)-tetrahydrodipicolinate from L-aspartate: step 4/4. Its function is as follows. Catalyzes the conversion of 4-hydroxy-tetrahydrodipicolinate (HTPA) to tetrahydrodipicolinate. This is 4-hydroxy-tetrahydrodipicolinate reductase from Myxococcus xanthus (strain DK1622).